We begin with the raw amino-acid sequence, 256 residues long: Probable enoyl-CoA hydratase echA14 (256 aa).

Positions 235-256 (GPQAKSVQSPEFAARLAAAQHR) are disordered.

This sequence belongs to the enoyl-CoA hydratase/isomerase family.

It catalyses the reaction a (3S)-3-hydroxyacyl-CoA = a (2E)-enoyl-CoA + H2O. The enzyme catalyses a 4-saturated-(3S)-3-hydroxyacyl-CoA = a (3E)-enoyl-CoA + H2O. Could possibly oxidize fatty acids using specific components. The protein is Probable enoyl-CoA hydratase echA14 (echA14) of Mycobacterium tuberculosis (strain CDC 1551 / Oshkosh).